The primary structure comprises 835 residues: DNA primase (835 aa).

A CHC2-type zinc finger spans residues 778 to 817 (CLNFKHRLKTQSVRIFLSLHLTPDNCVTLTLMSQCFASKC).

The protein belongs to the herpesviridae DNA primase family. As to quaternary structure, associates with the helicase and the primase-associated factor to form the helicase-primase factor.

The protein resides in the host nucleus. Essential component of the helicase/primase complex. Unwinds the DNA at the replication forks and generates single-stranded DNA for both leading and lagging strand synthesis. The primase initiates primer synthesis and thereby produces large amount of short RNA primers on the lagging strand that the polymerase elongates using dNTPs. This Saimiri sciureus (Common squirrel monkey) protein is DNA primase (56).